A 226-amino-acid polypeptide reads, in one-letter code: uncharacterized protein (226 aa).

The region spanning 71–207 is the RNase H type-1 domain; the sequence is EPDDITVYFD…ADGLAKKILS (137 aa).

This is an uncharacterized protein from Bacillus subtilis (strain 168).